Consider the following 74-residue polypeptide: Cytochrome c oxidase assembly factor 5 (74 aa).

The region spanning 27-65 (QSDCVVQEGKSPRQCLKEGYCNSLKYAFFECKRSVLDNR) is the CHCH domain. The Cx10C motif motif lies at 30–41 (CVVQEGKSPRQC). Intrachain disulfides connect C30–C57 and C41–C47. A Phosphoserine modification is found at S37. Positions 47–57 (CNSLKYAFFEC) match the Cx9C motif motif.

This sequence belongs to the PET191 family.

Its function is as follows. Involved in an early step of the mitochondrial complex IV assembly process. The protein is Cytochrome c oxidase assembly factor 5 (COA5) of Homo sapiens (Human).